Reading from the N-terminus, the 200-residue chain is V-set and transmembrane domain-containing protein 5 (200 aa).

The N-terminal stretch at 1-28 is a signal peptide; sequence MRPLPSGRRKTRGISLGLFALCLAAARC. The Extracellular portion of the chain corresponds to 29 to 147; the sequence is LQSQGVSLYI…VSEILYEDLH (119 aa). In terms of domain architecture, Ig-like C2-type spans 37 to 139; the sequence is YIPQATINAT…QFGTIVLHVS (103 aa). N-linked (GlcNAc...) asparagine glycosylation is present at asparagine 102. Residues 148 to 168 form a helical membrane-spanning segment; that stretch reads FVAVILAFLAAVAAVLISLMW. At 169-200 the chain is on the cytoplasmic side; sequence VCNKCAYKFQRKRRHKLKESTTEEIELEDVEC. The tract at residues 170 to 186 is important for CDC42-dependent filopodia induction; the sequence is CNKCAYKFQRKRRHKLK.

As to quaternary structure, can homooligomerize through cis interactions within the same cell membrane. In terms of processing, N-glycosylated.

The protein localises to the cell membrane. It localises to the cell projection. Its subcellular location is the dendrite. It is found in the axon. Functionally, cell adhesion-like membrane protein of the central nervous system (CNS) which modulates both the position and complexity of central neurons by altering their membrane morphology and dynamics. Involved in the formation of neuronal dendrites and protrusions including dendritic filopodia. In synaptogenesis, regulates synapse formation by altering dendritic spine morphology and actin distribution. Promotes formation of unstable neuronal spines such as thin and branched types. Regulates neuronal morphogenesis and migration during cortical development in the brain. In Homo sapiens (Human), this protein is V-set and transmembrane domain-containing protein 5 (VSTM5).